We begin with the raw amino-acid sequence, 218 residues long: uncharacterized protein (218 aa).

A compositionally biased stretch (basic and acidic residues) spans 184–202; sequence MDREEKRKEKEEKRKRELA. Positions 184–218 are disordered; sequence MDREEKRKEKEEKRKRELAARQLKRQEKKKQKTSK. Over residues 205–218 the composition is skewed to basic residues; that stretch reads QLKRQEKKKQKTSK.

This is an uncharacterized protein from Mycoplasma pneumoniae (strain ATCC 29342 / M129 / Subtype 1) (Mycoplasmoides pneumoniae).